Here is a 370-residue protein sequence, read N- to C-terminus: Psilocybin cluster transcription regulator (370 aa).

2 disordered regions span residues 1 to 39 (MAPT…ADIS) and 102 to 221 (YQTG…RRRR). Over residues 143–152 (IQHQDQQQSG) the composition is skewed to polar residues. A compositionally biased stretch (low complexity) spans 183–202 (TSTSTPSGGRRGGRSATMGS). Residues 204–218 (EWSRQRKDNHKEVER) are compositionally biased toward basic and acidic residues. Positions 208–221 (QRKDNHKEVERRRR) are basic motif. The bHLH domain occupies 208–258 (QRKDNHKEVERRRRGNINEGINELGRIVPSGSGEKAKGAILSRAVQYIHHL). The tract at residues 222–258 (GNINEGINELGRIVPSGSGEKAKGAILSRAVQYIHHL) is helix-loop-helix motif. Positions 317-370 (VSTAGAGSGAAKDESAAGTKRRSTDGADAAGTNVEGGNNDNAEGERDGKRQRTE) are disordered. The segment covering 359 to 370 (EGERDGKRQRTE) has biased composition (basic and acidic residues).

It is found in the nucleus. Functionally, transcription factor that may regulate the expression of the gene cluster that mediates the biosynthesis of psilocybin, a psychotropic tryptamine-derived natural product. The polypeptide is Psilocybin cluster transcription regulator (Psilocybe cyanescens).